The following is a 512-amino-acid chain: 2,3-bisphosphoglycerate-independent phosphoglycerate mutase (512 aa).

Mn(2+)-binding residues include Asp-11 and Ser-61. Catalysis depends on Ser-61, which acts as the Phosphoserine intermediate. Substrate contacts are provided by residues His-122, 152 to 153, Arg-184, Arg-190, 259 to 262, and Lys-332; these read RD and RADR. Mn(2+) contacts are provided by Asp-399, His-403, Asp-440, His-441, and His-459.

It belongs to the BPG-independent phosphoglycerate mutase family. In terms of assembly, monomer. Mn(2+) serves as cofactor.

The enzyme catalyses (2R)-2-phosphoglycerate = (2R)-3-phosphoglycerate. The protein operates within carbohydrate degradation; glycolysis; pyruvate from D-glyceraldehyde 3-phosphate: step 3/5. Catalyzes the interconversion of 2-phosphoglycerate and 3-phosphoglycerate. The chain is 2,3-bisphosphoglycerate-independent phosphoglycerate mutase from Francisella philomiragia subsp. philomiragia (strain ATCC 25017 / CCUG 19701 / FSC 153 / O#319-036).